We begin with the raw amino-acid sequence, 100 residues long: NADH-quinone oxidoreductase subunit K (100 aa).

3 consecutive transmembrane segments (helical) span residues Ile-4–Val-24, Leu-29–Phe-49, and Phe-63–Val-83.

It belongs to the complex I subunit 4L family. In terms of assembly, NDH-1 is composed of 14 different subunits. Subunits NuoA, H, J, K, L, M, N constitute the membrane sector of the complex.

The protein resides in the cell inner membrane. The enzyme catalyses a quinone + NADH + 5 H(+)(in) = a quinol + NAD(+) + 4 H(+)(out). Its function is as follows. NDH-1 shuttles electrons from NADH, via FMN and iron-sulfur (Fe-S) centers, to quinones in the respiratory chain. The immediate electron acceptor for the enzyme in this species is believed to be ubiquinone. Couples the redox reaction to proton translocation (for every two electrons transferred, four hydrogen ions are translocated across the cytoplasmic membrane), and thus conserves the redox energy in a proton gradient. The sequence is that of NADH-quinone oxidoreductase subunit K from Myxococcus xanthus (strain DK1622).